A 364-amino-acid chain; its full sequence is F-box/LRR-repeat protein At1g55660 (364 aa).

An F-box domain is found at 52–98 (MDKISQLPDELLVKVLSFLSTKDAVSTSILSMRWKSLWMWLPKLEYN). LRR repeat units follow at residues 158–179 (NVRELSLKLFNFAELPTKLPKS), 185–206 (SIVILKLKDEILVDVPRKVCLP), 207–228 (SLKTLFLGRVTYSDANSLHRLL), 233–254 (VLEDLVMERDKIDNLGKLSVIV), 256–277 (SLQRLTLKMSRPCHLDGLKMNS), and 279–300 (SLKYLKVIDERLESDSDDESDS).

The chain is F-box/LRR-repeat protein At1g55660 from Arabidopsis thaliana (Mouse-ear cress).